The primary structure comprises 295 residues: Cytidine deaminase (295 aa).

2 CMP/dCMP-type deaminase domains span residues 48-168 and 187-295; these read ADDE…FGPA and EETT…YLAI. Position 89-91 (89-91) interacts with substrate; that stretch reads NLE. His102 is a Zn(2+) binding site. Glu104 serves as the catalytic Proton donor. Positions 129 and 132 each coordinate Zn(2+).

This sequence belongs to the cytidine and deoxycytidylate deaminase family. Homodimer. Requires Zn(2+) as cofactor.

The catalysed reaction is cytidine + H2O + H(+) = uridine + NH4(+). It carries out the reaction 2'-deoxycytidine + H2O + H(+) = 2'-deoxyuridine + NH4(+). Its function is as follows. This enzyme scavenges exogenous and endogenous cytidine and 2'-deoxycytidine for UMP synthesis. The polypeptide is Cytidine deaminase (Vibrio atlanticus (strain LGP32) (Vibrio splendidus (strain Mel32))).